Here is a 151-residue protein sequence, read N- to C-terminus: Neuroglobin (151 aa).

Residues 1–149 enclose the Globin domain; it reads MERPEPELIR…VVQAMSRGWD (149 aa). Residues H64 and H96 each contribute to the heme b site.

The protein belongs to the globin family. Monomer. Homodimer and homotetramer; disulfide-linked. Mainly monomeric but also detected as part of homodimers and homotetramers. Interacts with 14-3-3 proteins; regulates the phosphorylation of NGB. Could interact (ferrous form) with G-alpha(i) proteins (GTP-bound form). Post-translationally, phosphorylated during hypoxia by ERK1/ERK2. Phosphorylation regulates the heme pocket hexacoordination preventing the association of His-64 with the heme metal center. Thereby, promotes the access of dioxygen and nitrite to the heme and stimulates the nitrite reductase activity. Phosphorylation during hypoxia is stabilized by 14-3-3 proteins.

The protein resides in the cytoplasm. It localises to the cytosol. The protein localises to the mitochondrion matrix. The enzyme catalyses Fe(III)-heme b-[protein] + nitric oxide + H2O = Fe(II)-heme b-[protein] + nitrite + 2 H(+). Monomeric globin with a bis-histidyl six-coordinate heme-iron atom through which it can bind dioxygen, carbon monoxide and nitric oxide. Could help transport oxygen and increase its availability to the metabolically active neuronal tissues, though its low quantity in tissues as well as its high affinity for dioxygen, which may limit its oxygen-releasing ability, argue against it. The ferrous/deoxygenated form exhibits a nitrite reductase activity and it could produce nitric oxide which in turn inhibits cellular respiration in response to hypoxia. In its ferrous/deoxygenated state, it may also exhibit GDI (Guanine nucleotide Dissociation Inhibitor) activity toward heterotrimeric G-alpha proteins, thereby regulating signal transduction to facilitate neuroprotective responses in the wake of hypoxia and associated oxidative stress. The chain is Neuroglobin from Canis lupus familiaris (Dog).